Here is a 424-residue protein sequence, read N- to C-terminus: MFDRVEIRIKSGDGGSGKVSFRREKFVPYGGPDGGDGGDGGNVYLEADSGLYSLLNFKHKRVHKAANGENGMGSRCTGHNGADLVIKVPVGTVATIVEENGQKRVLADLAADGDRTLVARGGQGGLGNTHFVSSTNQAPMLAQKGQPGGEYELILELKLIADVAIIGYPNVGKSSLLSLLTAAKPRVANYPFTTLSPVMGVVERTEGTFVMAEVPGLIEDAHLGRGLGHDFLRHISRTRMVIHLLDGTSDNPIDDMIKVNSELYLYDASLSERPQVVAVNKIDDELVQLRREELTETFKEAGLEVFFISALTGEGVEVLLDKVAEKLAILKAADAPETETDQEIKVFRPAPKGKMGFHITRLEDGWQVEAPEIERIIEHSDIEDLEVRRQIMVLLKHRNVQQALIKAGAVIGQKIITGRLEWYL.

Residues 1-160 enclose the Obg domain; the sequence is MFDRVEIRIK…YELILELKLI (160 aa). An OBG-type G domain is found at 161-328; it reads ADVAIIGYPN…LLDKVAEKLA (168 aa). GTP is bound by residues 167–174, 192–196, 213–216, 280–283, and 309–311; these read GYPNVGKS, FTTLS, EVPG, NKID, and SAL. Residues S174 and T194 each contribute to the Mg(2+) site. Positions 349–424 constitute an OCT domain; the sequence is PAPKGKMGFH…IITGRLEWYL (76 aa).

The protein belongs to the TRAFAC class OBG-HflX-like GTPase superfamily. OBG GTPase family. In terms of assembly, monomer. Mg(2+) is required as a cofactor.

It is found in the cytoplasm. Its function is as follows. An essential GTPase which binds GTP, GDP and possibly (p)ppGpp with moderate affinity, with high nucleotide exchange rates and a fairly low GTP hydrolysis rate. Plays a role in control of the cell cycle, stress response, ribosome biogenesis and in those bacteria that undergo differentiation, in morphogenesis control. The protein is GTPase Obg of Dehalococcoides mccartyi (strain ATCC BAA-2266 / KCTC 15142 / 195) (Dehalococcoides ethenogenes (strain 195)).